The sequence spans 117 residues: Large ribosomal subunit protein bL20 (117 aa).

This sequence belongs to the bacterial ribosomal protein bL20 family.

In terms of biological role, binds directly to 23S ribosomal RNA and is necessary for the in vitro assembly process of the 50S ribosomal subunit. It is not involved in the protein synthesizing functions of that subunit. In Aliivibrio fischeri (strain ATCC 700601 / ES114) (Vibrio fischeri), this protein is Large ribosomal subunit protein bL20.